Consider the following 100-residue polypeptide: NADH-quinone oxidoreductase subunit K 2 (100 aa).

A run of 3 helical transmembrane segments spans residues 4-24 (LNNYLILSAILFSIGTIGVLV), 29-49 (IVIFMCVEMMLNAVNLTFIAF), and 60-80 (IFVFFVMTVAAAEAAVGLALM).

It belongs to the complex I subunit 4L family. As to quaternary structure, NDH-1 is composed of 14 different subunits. Subunits NuoA, H, J, K, L, M, N constitute the membrane sector of the complex.

The protein localises to the cell inner membrane. The catalysed reaction is a quinone + NADH + 5 H(+)(in) = a quinol + NAD(+) + 4 H(+)(out). Its function is as follows. NDH-1 shuttles electrons from NADH, via FMN and iron-sulfur (Fe-S) centers, to quinones in the respiratory chain. The immediate electron acceptor for the enzyme in this species is believed to be ubiquinone. Couples the redox reaction to proton translocation (for every two electrons transferred, four hydrogen ions are translocated across the cytoplasmic membrane), and thus conserves the redox energy in a proton gradient. This Geotalea uraniireducens (strain Rf4) (Geobacter uraniireducens) protein is NADH-quinone oxidoreductase subunit K 2.